An 801-amino-acid chain; its full sequence is H(+)/Cl(-) exchange transporter 3 (801 aa).

Residues 1–125 (MESEQLFHRG…WEMTKSLYDA (125 aa)) lie on the Cytoplasmic side of the membrane. Short sequence motifs (di-leucine internalization motif; mediates targeting to late endosome and lysosome membranes) lie at residues 28-29 (LL), 46-47 (LL), and 71-75 (LLDLL). A helical membrane pass occupies residues 126 to 163 (WSGWLVVTLTGLASGALAGLIDIAADWMTDLKEGICLS). An N-linked (GlcNAc...) asparagine glycan is attached at asparagine 177. The helical transmembrane segment at 209-232 (MNYIMYIFWALSFAFLAVSLVKVF) threads the bilayer. A Selectivity filter part_1 motif is present at residues 238–242 (GSGIP). Chloride is bound at residue serine 239. The helical intramembrane region spans 241 to 248 (IPEIKTIL). 2 consecutive transmembrane segments (helical) span residues 258 to 276 (GKWT…VASG) and 282 to 301 (EGPL…YLFP). The Selectivity filter part_2 signature appears at 280–284 (GKEGP). Intramembrane regions (helical) lie at residues 313–325 (VLSA…VSVA) and 329–337 (PIGGVLFSL). The next 3 helical transmembrane spans lie at 349–367 (LWRS…RSIN), 391–416 (FPFI…AWCR), and 423–443 (FGKY…VIAF). N-linked (GlcNAc...) asparagine glycans are attached at residues asparagine 451 and asparagine 479. Residues 500 to 520 (IWQLCLALIFKIIMTVFTFGI) traverse the membrane as a helical segment. The short motif at 525–529 (GLFIP) is the Selectivity filter part_3 element. Phenylalanine 527 is a chloride binding site. 2 consecutive intramembrane regions (helical) follow at residues 555-569 (GLYA…LGGV) and 573-584 (TVSLVVIVFELT). The note=Loop between two helices intramembrane region spans 585 to 588 (GGLE). A helical transmembrane segment spans residues 589–607 (YIVPLMAAVMTSKWVGDAF). The Cytoplasmic portion of the chain corresponds to 608-801 (GREGIYEAHI…NQDPASIMFN (194 aa)). Tyrosine 613 lines the chloride pocket. CBS domains lie at 641–705 (MRPR…ARKK) and 738–795 (LDMS…NQDP). ATP contacts are provided by residues 672–674 (YNG) and 779–782 (TKKD).

This sequence belongs to the chloride channel (TC 2.A.49) family. ClC-3/CLCN3 subfamily. As to quaternary structure, monomer and homodimer. Forms heterodimers with CLCN4. In terms of processing, N-glycosylated.

The protein resides in the early endosome membrane. The protein localises to the late endosome membrane. Its subcellular location is the lysosome membrane. It is found in the cell membrane. Functionally, strongly outwardly rectifying, electrogenic H(+)/Cl(-)exchanger which mediates the exchange of chloride ions against protons. The CLC channel family contains both chloride channels and proton-coupled anion transporters that exchange chloride or another anion for protons. The presence of conserved gating glutamate residues is typical for family members that function as antiporters. The sequence is that of H(+)/Cl(-) exchange transporter 3 (CLCN3) from Pongo abelii (Sumatran orangutan).